A 141-amino-acid chain; its full sequence is Endoribonuclease YbeY (141 aa).

Zn(2+) contacts are provided by His105, His109, and Asp115.

Belongs to the endoribonuclease YbeY family. It depends on Zn(2+) as a cofactor.

It is found in the cytoplasm. Functionally, single strand-specific metallo-endoribonuclease involved in late-stage 70S ribosome quality control and in maturation of the 3' terminus of the 16S rRNA. This chain is Endoribonuclease YbeY, found in Chloroherpeton thalassium (strain ATCC 35110 / GB-78).